The primary structure comprises 201 residues: Calcium channel flower (201 aa).

The next 3 helical transmembrane spans lie at 37–57 (LGIVGAFFAILFGLWNVLSII), 59–79 (LSVSCLVAGIIQMIAGFVVMA), and 103–120 (PMYFRAGLYCALAVPPIF).

Belongs to the calcium channel flower family. Homomultimer. Associates with the dally/ magu complex.

Its subcellular location is the cell membrane. The protein resides in the cytoplasmic vesicle. It is found in the secretory vesicle. It localises to the synaptic vesicle membrane. The protein localises to the presynaptic cell membrane. Its subcellular location is the endosome. Channel activity is inhibited by La(3+), which reduces Ca(2+) influx and thus inhibits it's function in promoting activity-dependent bulk endocytosis (ADBE) in response to high stimuli. Its function is as follows. Transmembrane protein which mediates synaptic endocytosis, fitness-based cell culling, neuronal culling, morphogen gradient scaling, and calcium transport. Regulates synaptic endocytosis and hence couples exo- with endocytosis. Controls two major modes of synaptic vesicle (SV) endocytosis in the synaptic boutons of neuromuscular junctions (NMJs); Ca(2+) channel-independent Clathrin-mediated endocytosis (CME) in response to mild stimulation, and Ca(2+) channel-dependent activity-dependent bulk endocytosis (ADBE) in response to strong stimulation. Functions in ADBE and subsequent SV reformation from bulk endosomes by initiating Ca(2+) channel-dependent phosphatidylinositol 4,5-bisphosphate (PtdIns(4,5)P2) compartmentalization in synaptic boutons. There it acts at the periactive zone to provide the low Ca(2+) levels required to initiate Calcineurin activation and upregulate PtdIns(4,5)P2. Conversely PtdIns(4,5)P2 enhances fwe Ca(2+) channel-activity, establishing a positive feedback loop that induces PtdIns(4,5)P2 microdomain at the periactive zone. These microdomains trigger bulk membrane invagination (i.e. ADBE) by triggering actin polymerization while also promoting localization of fwe to bulk endosomes, thereby removing the ADBE trigger to reduce endocytosis and prevent excess membrane uptake. PtdIns(4,5)P2 then promotes SV reformation from the bulk endosomes, to coordinate ADBE and subsequent SV reformation. Different combinations of the flower isoforms at the cell membrane are also required for the identification and elimination of suboptimal or supernumerary cells during development, regeneration, and adulthood. Required for the recognition and elimination of unfit cells in the developing wing during cell competition. In the developing pupal retina, mediates the elimination of unwanted postmitotic neurons, including supernumerary photoreceptor neurons that form at the periphery of the retina and are contained within incomplete ommatidia units. Also required for efficient elimination and replacement of old neurons by newly generated neurons during regeneration in the adult brain following mechanical injury. Downstream of the flower fitness fingerprints, cells identified as unwanted or unfit are eliminated via apoptosis through the expression of ahuizotl (azot). However, the cells marked for elimination by the flower isoforms only undergo apoptosis if additional thresholds are met; (1) their neighboring fit/healthy cells express different levels of the fwe isoforms, and (2) the levels of the protective signal SPARC expressed by the loser or unwanted cells are unable to inhibit caspase activation. These additional thresholds for flower-mediated apoptosis, allows useful cells to recover from transient and limited stress before they are unnecessarily eliminated. Functions with dally and magu in a mechanism of scaling, which utilises apoptosis to ensure that the dpp morphogen gradient, which mediates organ growth, remains proportional to the size of the growing wing. In this mechanism, fwe represses dally- and Magu-dependent activity in expanding the gradient, and dally/Magu inhibits fwe-dependent apoptosis to keep cell death rate low. When the levels of these different proteins are optimally regulated the gradient correctly scales with organ growth but when this fails, fwe-mediated apoptosis is activated to trim the developing tissue to match the correct size of the gradient. This is Calcium channel flower from Drosophila willistoni (Fruit fly).